The chain runs to 336 residues: Fructose-1,6-bisphosphatase class 1 (336 aa).

Mg(2+)-binding residues include Glu-90, Asp-112, Leu-114, and Asp-115. Substrate-binding positions include 115 to 118 (DGSS), Asn-211, and Lys-277. Residue Glu-283 participates in Mg(2+) binding.

The protein belongs to the FBPase class 1 family. In terms of assembly, homotetramer. Mg(2+) is required as a cofactor.

It is found in the cytoplasm. The enzyme catalyses beta-D-fructose 1,6-bisphosphate + H2O = beta-D-fructose 6-phosphate + phosphate. It functions in the pathway carbohydrate biosynthesis; gluconeogenesis. The protein is Fructose-1,6-bisphosphatase class 1 of Pseudomonas putida (strain W619).